Consider the following 261-residue polypeptide: MIYKCPMCREFFSERADLFMHQKIHTAEKPHKCDKCDKGFFHISELHIHWRDHTGEKVYKCDDCGKDFSTTTKLNRHKKIHTVEKPYKCYECGKAFNWSSHLQIHMRVHTGEKPYVCSECGRGFSNSSNLCMHQRVHTGEKPFKCEECGKAFRHTSSLCMHQRVHTGEKLYKCYECGKAFSQSSSLCIHQRVHTGEKPYRCCGCGKAFSQSSSLCIHQRVHTGEKPFKCDECGKAFSQSTSLCIHQRVHTKERNHLKISVI.

9 consecutive C2H2-type zinc fingers follow at residues 3 to 25, 31 to 53, 59 to 81, 87 to 109, 115 to 137, 143 to 165, 171 to 193, 199 to 221, and 227 to 249; these read YKCP…QKIH, HKCD…WRDH, YKCD…KKIH, YKCY…MRVH, YVCS…QRVH, FKCE…QRVH, YKCY…QRVH, YRCC…QRVH, and FKCD…QRVH. Residue Lys-257 forms a Glycyl lysine isopeptide (Lys-Gly) (interchain with G-Cter in SUMO2) linkage.

It belongs to the krueppel C2H2-type zinc-finger protein family.

It localises to the nucleus. Functionally, may be involved in transcriptional regulation. The polypeptide is Zinc finger protein 664 (ZNF664) (Pongo abelii (Sumatran orangutan)).